A 344-amino-acid chain; its full sequence is MDIFREIASSTKGENVFISPATISSVLTILYYGANGSTAEQLSKYVEKEETMDKVSAQNISFKSMNKVYGRYSAVFKNSFLGKIGDNFQTVDFTDCRTIDAINKCVDVFTEGKINPLLTEQLSPNTCLLAISAVYFKAKWLIPFKKEFTSDYPFYVSPTEMVDVSMMSMYGESFNYASVKESFGNFSIIELPYVGNTSMMVILPDKIDGLESIKQNLTDTNFKKWCNSLEATFIDVHIPKFKVTGSYNLVDTLVKLGLTDVFYSTGDYSNMCNSDVSVDAMIHKTYIDVNEEYTEAAAATSVLVADCASTVTNEFCADHPFIYVIRHVDGKILFVGRYCSPTTN.

It belongs to the serpin family. Poxviruses subfamily.

Its subcellular location is the host cytoplasm. Functionally, viral serpin that inhibits both cysteine and serine proteinases involved in the regulation of host inflammatory and apoptosis processes. Major anti-apoptotic protein which inhibits both intrinsic and extrinsic pathways and strongly cleaves host CASP1 and CASP8 but is a rather poor inhibitor of host CASP3. Prevents the proteolytic activity of host interleukin-1-beta converting enzyme (ICE) and ICE-like enzymes. Can also block apoptosis through host tumor necrosis factor (TNF) receptor. The inhibition of host ICE is an example of a 'cross-class' interaction, in which a serpin inhibits a non-serine proteinase. Also inhibits granzyme B. The polypeptide is Serine proteinase inhibitor 2 (OPG199) (Homo sapiens (Human)).